The following is a 186-amino-acid chain: Peptidyl-tRNA hydrolase (186 aa).

Tyrosine 13 contacts tRNA. Catalysis depends on histidine 18, which acts as the Proton acceptor. Residues tyrosine 59, asparagine 61, and asparagine 107 each coordinate tRNA.

This sequence belongs to the PTH family. As to quaternary structure, monomer.

Its subcellular location is the cytoplasm. It carries out the reaction an N-acyl-L-alpha-aminoacyl-tRNA + H2O = an N-acyl-L-amino acid + a tRNA + H(+). Its function is as follows. Hydrolyzes ribosome-free peptidyl-tRNAs (with 1 or more amino acids incorporated), which drop off the ribosome during protein synthesis, or as a result of ribosome stalling. Catalyzes the release of premature peptidyl moieties from peptidyl-tRNA molecules trapped in stalled 50S ribosomal subunits, and thus maintains levels of free tRNAs and 50S ribosomes. The chain is Peptidyl-tRNA hydrolase from Thermotoga maritima (strain ATCC 43589 / DSM 3109 / JCM 10099 / NBRC 100826 / MSB8).